A 313-amino-acid chain; its full sequence is Pyrimidine-specific ribonucleoside hydrolase RihB (313 aa).

Asp-11 functions as the Proton acceptor in the catalytic mechanism. Ca(2+) is bound by residues Asp-11, Asp-16, and Val-124. Residues Gln-227 and His-239 each contribute to the substrate site. Position 240 (Asp-240) interacts with Ca(2+).

Belongs to the IUNH family. RihB subfamily. As to quaternary structure, homotetramer. Ca(2+) is required as a cofactor.

The enzyme catalyses a pyrimidine ribonucleoside + H2O = a pyrimidine nucleobase + D-ribose. Functionally, hydrolyzes cytidine or uridine to ribose and cytosine or uracil, respectively. Has a clear preference for cytidine over uridine. Strictly specific for ribonucleosides. The sequence is that of Pyrimidine-specific ribonucleoside hydrolase RihB from Escherichia coli (strain SE11).